Consider the following 526-residue polypeptide: Outer capsid protein VP5 (526 aa).

The segment at 1-42 is involved in membrane permeabilization; sequence MGKVIRSLSRFGKKVGNALTSNTAKKIYSTIGKAAERFAESE.

The protein belongs to the orbivirus VP5 family.

It is found in the virion. In terms of biological role, VP5 protein is one of the two proteins (with VP2) which constitute the virus particle outer capsid. Acts as a membrane permeabilization protein that mediates release of viral particles from endosomal compartments into the cytoplasm. Permeabilization activity is probably negatively regulated by VP2 and is triggered by endosomal degradation of VP2 and exposure to low pH. In Bluetongue virus 1 (isolate Australia) (BTV 1), this protein is Outer capsid protein VP5 (Segment-6).